Here is a 652-residue protein sequence, read N- to C-terminus: Oligopeptide-binding protein AliB (652 aa).

The N-terminal stretch at Met1–Ala24 is a signal peptide. A lipid anchor (N-palmitoyl cysteine) is attached at Cys25. Cys25 is lipidated: S-diacylglycerol cysteine.

The protein belongs to the bacterial solute-binding protein 5 family.

Its subcellular location is the cell membrane. In terms of biological role, part of the binding-protein-dependent transport system for oligopeptides; probably an oligopeptide binding protein. In Streptococcus pneumoniae serotype 4 (strain ATCC BAA-334 / TIGR4), this protein is Oligopeptide-binding protein AliB (aliB).